The following is a 769-amino-acid chain: Wall-associated receptor kinase-like 10 (769 aa).

A signal peptide spans 1–24 (MSSNCSCSLLSLFSLLLIIDLTVA). Residues 25–358 (SSCPKTCGGI…YTCEYTNHRP (334 aa)) are Extracellular-facing. 8 N-linked (GlcNAc...) asparagine glycosylation sites follow: asparagine 58, asparagine 114, asparagine 134, asparagine 182, asparagine 187, asparagine 237, asparagine 262, and asparagine 296. Positions 291 to 351 (CLCDYNSTTT…CVNLLGGYTC (61 aa)) are atypical EGF-like. Disulfide bonds link cysteine 293–cysteine 305, cysteine 327–cysteine 342, and cysteine 337–cysteine 351. The helical transmembrane segment at 359 to 379 (LVIGLSTSFSTLVFIGGIYWL) threads the bilayer. Topologically, residues 380–769 (YKFIRRQRRL…RSDVEPLFPR (390 aa)) are cytoplasmic. The Protein kinase domain maps to 433–718 (FSLTRILGEG…SYSEDMQPYE (286 aa)). Residues 439 to 447 (LGEGGQGTV) and lysine 461 each bind ATP. Residue tyrosine 506 is modified to Phosphotyrosine. Aspartate 559 acts as the Proton acceptor in catalysis. A phosphothreonine mark is found at threonine 593 and threonine 598. Residue tyrosine 606 is modified to Phosphotyrosine.

The protein belongs to the protein kinase superfamily. Ser/Thr protein kinase family.

Its subcellular location is the membrane. The enzyme catalyses L-seryl-[protein] + ATP = O-phospho-L-seryl-[protein] + ADP + H(+). The catalysed reaction is L-threonyl-[protein] + ATP = O-phospho-L-threonyl-[protein] + ADP + H(+). Serine/threonine-protein kinase that may function as a signaling receptor of extracellular matrix component. This Arabidopsis thaliana (Mouse-ear cress) protein is Wall-associated receptor kinase-like 10 (WAKL10).